We begin with the raw amino-acid sequence, 339 residues long: Protein RecA (339 aa).

Gly-74–Thr-81 provides a ligand contact to ATP.

It belongs to the RecA family.

It is found in the cytoplasm. Its function is as follows. Can catalyze the hydrolysis of ATP in the presence of single-stranded DNA, the ATP-dependent uptake of single-stranded DNA by duplex DNA, and the ATP-dependent hybridization of homologous single-stranded DNAs. It interacts with LexA causing its activation and leading to its autocatalytic cleavage. The protein is Protein RecA of Phytoplasma mali (strain AT).